Here is a 62-residue protein sequence, read N- to C-terminus: Large ribosomal subunit protein bL28 (62 aa).

The protein belongs to the bacterial ribosomal protein bL28 family.

The sequence is that of Large ribosomal subunit protein bL28 from Staphylococcus haemolyticus (strain JCSC1435).